The primary structure comprises 103 residues: Large ribosomal subunit protein bL21 (103 aa).

Belongs to the bacterial ribosomal protein bL21 family. Part of the 50S ribosomal subunit. Contacts protein L20.

In terms of biological role, this protein binds to 23S rRNA in the presence of protein L20. This Shewanella putrefaciens (strain CN-32 / ATCC BAA-453) protein is Large ribosomal subunit protein bL21.